Here is a 508-residue protein sequence, read N- to C-terminus: Photosystem II CP47 reaction center protein (508 aa).

A run of 6 helical transmembrane segments spans residues 21-36, 101-115, 140-156, 203-218, 237-252, and 457-472; these read AVHI…WAGS, ILFS…IWHW, GIHL…FGAF, IAAG…FHLS, VLSS…AFVV, and SFAL…HGAR.

The protein belongs to the PsbB/PsbC family. PsbB subfamily. PSII is composed of 1 copy each of membrane proteins PsbA, PsbB, PsbC, PsbD, PsbE, PsbF, PsbH, PsbI, PsbJ, PsbK, PsbL, PsbM, PsbT, PsbX, PsbY, PsbZ, Psb30/Ycf12, at least 3 peripheral proteins of the oxygen-evolving complex and a large number of cofactors. It forms dimeric complexes. Requires Binds multiple chlorophylls. PSII binds additional chlorophylls, carotenoids and specific lipids. as cofactor.

The protein localises to the plastid. Its subcellular location is the chloroplast thylakoid membrane. One of the components of the core complex of photosystem II (PSII). It binds chlorophyll and helps catalyze the primary light-induced photochemical processes of PSII. PSII is a light-driven water:plastoquinone oxidoreductase, using light energy to abstract electrons from H(2)O, generating O(2) and a proton gradient subsequently used for ATP formation. This Oenothera biennis (German evening primrose) protein is Photosystem II CP47 reaction center protein.